Reading from the N-terminus, the 423-residue chain is Serine incorporator 5 (423 aa).

At 1-36 the chain is on the extracellular side; it reads MSAQCCAGQLACCCGSAGCSLCCDCCPRIRQSLSTR. The helical transmembrane segment at 37–57 threads the bilayer; the sequence is FMYALYFILVVVLCCIMMSTT. Topologically, residues 58–89 are cytoplasmic; sequence VAHKMKEHIPFFEDMCKGIKAGDTCEKLVGYS. The helical transmembrane segment at 90-110 threads the bilayer; sequence AVYRVCFGMACFFFIFCLLTL. The Extracellular portion of the chain corresponds to 111–124; sequence KINNSKSCRAHIHN. N-linked (GlcNAc...) asparagine glycosylation occurs at asparagine 113. Residues 125–145 form a helical membrane-spanning segment; the sequence is GFWFFKLLLLGAMCSGAFFIP. Residues 146-156 are Cytoplasmic-facing; it reads DQDTFLNAWRY. The helical transmembrane segment at 157 to 177 threads the bilayer; it reads VGAVGGFLFIGIQLLLLVEFA. At 178 to 198 the chain is on the extracellular side; that stretch reads HKWNKNWTAGTASNKLWYASL. Asparagine 183 carries an N-linked (GlcNAc...) asparagine glycan. A helical membrane pass occupies residues 199–219; it reads ALVTLIMYSIATGGLVLMAVF. The Cytoplasmic segment spans residues 220–230; the sequence is YTQKDSCMENK. The helical transmembrane segment at 231 to 251 threads the bilayer; sequence ILLGVNGGLCLLISLVAISPW. The Extracellular segment spans residues 252 to 258; it reads VQNRQPH. Residues 259–279 traverse the membrane as a helical segment; it reads SGLLQSGVISCYVTYLTFSAL. Topologically, residues 280–311 are cytoplasmic; that stretch reads SSKPAEVVLDEHGKNVTICVPDFGQDLYRDEN. The helical transmembrane segment at 312-332 threads the bilayer; that stretch reads LVTILGTSLLIGCILYSCLTS. Over 333–385 the chain is Extracellular; it reads TTRSSSDALQGRYAAPELEIARCCFCFSPGGEDTEEQQPGKEGPRVIYDEKKG. The chain crosses the membrane as a helical span at residues 386 to 406; it reads TVYIYSYFHFVFFLASLYVMM. Topologically, residues 407–423 are cytoplasmic; sequence TVTNWFNHVRSAFHLLP.

This sequence belongs to the TDE1 family. As to expression, highly expressed in placenta, skeletal muscle, spleen, thymus, testis and peripheral leukocyte and is expressed weakly in the heart, liver and fetal brain.

The protein localises to the cell membrane. The protein resides in the cytoplasm. It localises to the perinuclear region. It carries out the reaction a 1,2-diacyl-sn-glycero-3-phospho-L-serine(in) = a 1,2-diacyl-sn-glycero-3-phospho-L-serine(out). The catalysed reaction is a 1,2-diacyl-sn-glycero-3-phosphocholine(in) = a 1,2-diacyl-sn-glycero-3-phosphocholine(out). The enzyme catalyses a 1,2-diacyl-sn-glycero-3-phosphoethanolamine(in) = a 1,2-diacyl-sn-glycero-3-phosphoethanolamine(out). Functionally, restriction factor required to restrict infectivity of lentiviruses, such as HIV-1: acts by inhibiting an early step of viral infection. Impairs the penetration of the viral particle into the cytoplasm. Non-ATP-dependent, non-specific lipid transporter for phosphatidylserine, phosphatidylcholine, and phosphatidylethanolamine. Functions as a scramblase that flips lipids in both directions across the membrane. Phospholipid scrambling results in HIV-1 surface exposure of phosphatidylserine and loss of membrane asymmetry, which leads to changes in HIV-1 Env conformation and loss of infectivity. Enhances the incorporation of serine into phosphatidylserine and sphingolipids. May play a role in providing serine molecules for the formation of myelin glycosphingolipids in oligodendrocytes. The protein is Serine incorporator 5 of Homo sapiens (Human).